A 367-amino-acid polypeptide reads, in one-letter code: Isocitrate dehydrogenase [NAD] regulatory subunit 2, mitochondrial (367 aa).

A mitochondrion-targeting transit peptide spans 1–25 (MSRQSFSLLKNLRSIASGSKIQTRS).

It belongs to the isocitrate and isopropylmalate dehydrogenases family. In terms of assembly, heterooligomer of catalytic and regulatory subunits. As to expression, ubiquitous. Predominantly expressed in roots, stems and leaves.

The protein resides in the mitochondrion. Its function is as follows. Performs an essential role in the oxidative function of the citric acid cycle. This chain is Isocitrate dehydrogenase [NAD] regulatory subunit 2, mitochondrial (IDH2), found in Arabidopsis thaliana (Mouse-ear cress).